Consider the following 46-residue polypeptide: Large ribosomal subunit protein bL36A (46 aa).

The protein belongs to the bacterial ribosomal protein bL36 family.

In Sodalis glossinidius (strain morsitans), this protein is Large ribosomal subunit protein bL36A.